Here is a 931-residue protein sequence, read N- to C-terminus: MQNPTQTMHIYDMPLRVIAGLSTLAKTTEEDDNTSTGIVVSEVGEPQVVNHPAWIDPFVAYQLRAPRKNITPDFIFGRADIGNAFSAFLPRRFSAPAVGTRLVVDPVFTYQQRTVLGLYNYFHADFYYIVHVPAPLGTGIYLKIYAPEFDTTTVTRGIRFKPSASPTIALSVPWSNDLSTVETSVGRVGQSGGSIVIETIEDNSNETVNTPLSITVWCCMANIKATGYRHADTSAYNEKGMNFISVPVPKPPVPPTKPITGEEQADNEVTAEGGKLVQELVYDHSAIPVAPVVETQAEQPEVPVSLVATRKNDTGHLATKWYDFAKISLSNPANMNWTTLTIDPYNNVTLSRDGESMVLPWRRNVWTTGSKSIGYIRTMVAQINIPRPPQISGVLEVKDSINNSSISLVEFGGKVEIPIIPKVMNGLATTASLPRHRLNPWMRTAESKVELQYRIIAFNRTSDIADLNVSVLLRPGDSQFQLPMKPDNNVDTRHFELVEALMYHYDSLRIRGEEQSLPENAPNAVSNPQQFITPATALSAEEYNVHEALGETEELELDEFPVLVFKGNVPVDSVTSIPLDLATIYDFAWDGEQNAISQKFQRFAHLIPKSAGGFGPVIGNYTITANLPTGVAGRILHNCLPGDCVDLAVSRIFGLKSLLGVAGTAVSAIGGPLLNGLVNTAAPILSGAAHAIGGNVVGGLADAVIDIGSNLLTPKEKEQPSANSSAISGDIPISRFVEMLKYVKENYQDNPVFPTLLVEPQNFISNAMTALKTIPIEVFANMRNVKVERNLFDRTVVPTVKEATLADIVIPNHMYGYILRDFLQNKRAFQSGTKQNVYFQQFLTVLSQRNIRTHITLNDITSCSIDSESIANKIERVKHYLSTNSSGETTEEFSRTDTGLLPTTTRKIVLGESKRRTERYVAETVFPSVRQ.

Post-translationally, proteolytic processing of ORF4 polyprotein yields the VP4a, VP4b and VP4c capsid proteins.

It localises to the virion. ORF4 polyprotein codes for VP4a, VP4b, and VP4c, three of the four proteins that self-assemble to form the icosahedral capsid. The capsid is made of VP3 (coded by ORF3), VP4a, VP4b and VP4c. The chain is ORF4 polyprotein from Drosophila melanogaster (Fruit fly).